The chain runs to 136 residues: Histone H3.3C-like (136 aa).

Arg3 is modified (asymmetric dimethylarginine; by PRMT6; alternate). Arg3 bears the Citrulline; alternate mark. At Thr4 the chain carries Phosphothreonine; by HASPIN. The residue at position 5 (Lys5) is an Allysine; alternate. Position 5 is an N6,N6,N6-trimethyllysine; alternate (Lys5). The residue at position 5 (Lys5) is an N6,N6-dimethyllysine; alternate. At Lys5 the chain carries N6-(2-hydroxyisobutyryl)lysine; alternate. Position 5 is an N6-(beta-hydroxybutyryl)lysine; alternate (Lys5). The residue at position 5 (Lys5) is an N6-acetyllysine; alternate. An N6-methyllysine; alternate modification is found at Lys5. Thr7 is modified (phosphothreonine; by PKC). At Lys10 the chain carries N6,N6,N6-trimethyllysine; alternate. Position 10 is an N6,N6-dimethyllysine; alternate (Lys10). Lys10 bears the N6-(2-hydroxyisobutyryl)lysine; alternate mark. N6-acetyllysine; alternate is present on Lys10. Lys10 carries the N6-methyllysine; alternate modification. Residue Ser11 is modified to ADP-ribosylserine; alternate. Position 11 is a phosphoserine; alternate; by AURKB, AURKC, RPS6KA3, RPS6KA4 and RPS6KA5 (Ser11). Thr12 is subject to Phosphothreonine; by PKC. Lys15 is modified (N6-(2-hydroxyisobutyryl)lysine; alternate). Lys15 bears the N6-(beta-hydroxybutyryl)lysine; alternate mark. N6-acetyllysine; alternate is present on Lys15. Lys15 bears the N6-glutaryllysine; alternate mark. Lys15 carries the N6-succinyllysine; alternate modification. Arg18 is modified (citrulline; alternate). At Arg18 the chain carries Asymmetric dimethylarginine; by CARM1; alternate. 2 positions are modified to N6-(2-hydroxyisobutyryl)lysine; alternate: Lys19 and Lys28. At Lys19 the chain carries N6-(beta-hydroxybutyryl)lysine; alternate. 2 positions are modified to N6-acetyllysine; alternate: Lys19 and Lys28. 2 positions are modified to N6-methyllysine; alternate: Lys19 and Lys28. 2 positions are modified to N6-glutaryllysine; alternate: Lys19 and Lys28. Lys19 bears the N6-butyryllysine; alternate mark. Lys28 carries the N6,N6,N6-trimethyllysine; alternate modification. Position 28 is an N6,N6-dimethyllysine; alternate (Lys28). At Ser29 the chain carries ADP-ribosylserine; alternate. Ser29 is modified (phosphoserine; alternate; by AURKB, AURKC and RPS6KA5). Ser32 carries the phosphoserine modification. N6-methyllysine is present on Lys38. Tyr42 carries the phosphotyrosine modification. Lys57 carries the N6,N6,N6-trimethyllysine; alternate modification. Lys57 carries the N6-(2-hydroxyisobutyryl)lysine; alternate modification. An N6-(beta-hydroxybutyryl)lysine; alternate modification is found at Lys57. The residue at position 57 (Lys57) is an N6-acetyllysine; alternate. An N6-glutaryllysine; alternate modification is found at Lys57. N6-succinyllysine; alternate is present on Lys57. Lys57 carries the post-translational modification N6-methyllysine; by EHMT2; alternate. The residue at position 58 (Ser58) is a Phosphoserine. 2 positions are modified to N6-(2-hydroxyisobutyryl)lysine; alternate: Lys65 and Lys80. N6-methyllysine; alternate is present on residues Lys65 and Lys80. N6,N6,N6-trimethyllysine; alternate is present on Lys80. N6,N6-dimethyllysine; alternate is present on Lys80. Lys80 is subject to N6-acetyllysine; alternate. Residue Lys80 is modified to N6-glutaryllysine; alternate. Position 80 is an N6-succinyllysine; alternate (Lys80). Thr81 is modified (phosphothreonine). Residue Ser87 is modified to Phosphoserine.

Belongs to the histone H3 family. As to quaternary structure, the nucleosome is a histone octamer containing two molecules each of H2A, H2B, H3 and H4 assembled in one H3-H4 heterotetramer and two H2A-H2B heterodimers. The octamer wraps approximately 147 bp of DNA. Post-translationally, acetylation is generally linked to gene activation. Acetylation on Lys-19 favors methylation at Arg-18. Citrullination at Arg-18 by PADI4 impairs methylation and represses transcription. In terms of processing, asymmetric dimethylation at Arg-18 (H3R17me2a) by CARM1 is linked to gene activation. Asymmetric dimethylation at Arg-3 (H3R2me2a) by PRMT6 is linked to gene repression and is mutually exclusive with H3 Lys-5 methylation (H3K4me2 and H3K4me3). H3R2me2a is present at the 3' of genes regardless of their transcription state and is enriched on inactive promoters, while it is absent on active promoters. Post-translationally, methylation at Lys-5 (H3K4me) and Lys-80 (H3K79me) are linked to gene activation. Methylation at Lys-5 (H3K4me) facilitates subsequent acetylation of H3 and H4. Methylation at Lys-80 (H3K79me) is associated with DNA double-strand break (DSB) responses and is a specific target for TP53BP1. Methylation at Lys-10 (H3K9me) and Lys-28 (H3K27me) are linked to gene repression. Methylation at Lys-10 (H3K9me) is a specific target for HP1 proteins (CBX1, CBX3 and CBX5) and prevents subsequent phosphorylation at Ser-11 (H3S10ph) and acetylation of H3 and H4. Methylation at Lys-5 (H3K4me) and Lys-80 (H3K79me) require preliminary monoubiquitination of H2B at 'Lys-120'. Methylation at Lys-10 (H3K9me) and Lys-28 (H3K27me) are enriched in inactive X chromosome chromatin. Monomethylation at Lys-57 (H3K56me1) by EHMT2/G9A in G1 phase promotes interaction with PCNA and is required for DNA replication. Phosphorylated at Thr-4 (H3T3ph) by HASPIN during prophase and dephosphorylated during anaphase. Phosphorylation at Ser-11 (H3S10ph) by AURKB is crucial for chromosome condensation and cell-cycle progression during mitosis and meiosis. In addition phosphorylation at Ser-11 (H3S10ph) by RPS6KA4 and RPS6KA5 is important during interphase because it enables the transcription of genes following external stimulation, like mitogens, stress, growth factors or UV irradiation and result in the activation of genes, such as c-fos and c-jun. Phosphorylation at Ser-11 (H3S10ph), which is linked to gene activation, prevents methylation at Lys-10 (H3K9me) but facilitates acetylation of H3 and H4. Phosphorylation at Ser-11 (H3S10ph) by AURKB mediates the dissociation of HP1 proteins (CBX1, CBX3 and CBX5) from heterochromatin. Phosphorylation at Ser-11 (H3S10ph) is also an essential regulatory mechanism for neoplastic cell transformation. Phosphorylated at Ser-29 (H3S28ph) by MAP3K20 isoform 1, RPS6KA5 or AURKB during mitosis or upon ultraviolet B irradiation. Phosphorylation at Thr-7 (H3T6ph) by PRKCB is a specific tag for epigenetic transcriptional activation that prevents demethylation of Lys-5 (H3K4me) by LSD1/KDM1A. At centromeres, specifically phosphorylated at Thr-12 (H3T11ph) from prophase to early anaphase, by DAPK3 and PKN1. Phosphorylation at Thr-12 (H3T11ph) by PKN1 or isoform M2 of PKM (PKM2) is a specific tag for epigenetic transcriptional activation that promotes demethylation of Lys-10 (H3K9me) by KDM4C/JMJD2C. Phosphorylation at Tyr-42 (H3Y41ph) by JAK2 promotes exclusion of CBX5 (HP1 alpha) from chromatin. In terms of processing, lysine deamination at Lys-5 (H3K4all) to form allysine is mediated by LOXL2. Allysine formation by LOXL2 only takes place on H3K4me3 and results in gene repression. Post-translationally, butyrylation of histones marks active promoters and competes with histone acetylation. It is present during late spermatogenesis. Succinylation at Lys-80 (H3K79succ) by KAT2A takes place with a maximum frequency around the transcription start sites of genes. It gives a specific tag for epigenetic transcription activation. In terms of processing, serine ADP-ribosylation constitutes the primary form of ADP-ribosylation of proteins in response to DNA damage. Serine ADP-ribosylation at Ser-11 (H3S10ADPr) is mutually exclusive with phosphorylation at Ser-11 (H3S10ph) and impairs acetylation at Lys-10 (H3K9ac).

It localises to the nucleus. Its subcellular location is the chromosome. Its function is as follows. Core component of nucleosome. Nucleosomes wrap and compact DNA into chromatin, limiting DNA accessibility to the cellular machineries which require DNA as a template. Histones thereby play a central role in transcription regulation, DNA repair, DNA replication and chromosomal stability. DNA accessibility is regulated via a complex set of post-translational modifications of histones, also called histone code, and nucleosome remodeling. The chain is Histone H3.3C-like from Bos taurus (Bovine).